The chain runs to 452 residues: Chloride/fluoride channel protein (452 aa).

The next 10 membrane-spanning stretches (helical) occupy residues 23-43, 57-77, 97-117, 160-180, 188-208, 222-242, 264-284, 315-337, 344-364, and 386-408; these read WLALAGLVALLAGSASALFLL, WVIWLLPVAGFAVGLAYHLIG, IVPLRMVPMVLIGTVVSHLFG, FASVFGTPLAGALFGLEVLAI, LFPCVVAAIVADQVGQAWGVV, LWSVMAVVAAGIVFGLTGLLF, PFAGGLLIAVAVWALGSNHYI, VFTVVSLGTGFKGGEVTPLFYIG, LAPLLHLPFGMLAGIGFVAVF, and IAPLAAIACIASYLVSGHTGIYH.

This sequence belongs to the chloride channel (TC 2.A.49) family.

It is found in the cell membrane. In terms of biological role, transports chloride and fluoride with similar efficiency. The sequence is that of Chloride/fluoride channel protein (eriC) from Pseudomonas syringae pv. tomato (strain ATCC BAA-871 / DC3000).